The following is a 314-amino-acid chain: Porphobilinogen deaminase (314 aa).

Cys249 is subject to S-(dipyrrolylmethanemethyl)cysteine.

It belongs to the HMBS family. In terms of assembly, monomer. Requires dipyrromethane as cofactor.

The catalysed reaction is 4 porphobilinogen + H2O = hydroxymethylbilane + 4 NH4(+). It functions in the pathway porphyrin-containing compound metabolism; protoporphyrin-IX biosynthesis; coproporphyrinogen-III from 5-aminolevulinate: step 2/4. Its function is as follows. Tetrapolymerization of the monopyrrole PBG into the hydroxymethylbilane pre-uroporphyrinogen in several discrete steps. The chain is Porphobilinogen deaminase from Brucella anthropi (strain ATCC 49188 / DSM 6882 / CCUG 24695 / JCM 21032 / LMG 3331 / NBRC 15819 / NCTC 12168 / Alc 37) (Ochrobactrum anthropi).